A 288-amino-acid chain; its full sequence is UDP-3-O-acyl-N-acetylglucosamine deacetylase (288 aa).

Residues His79, His236, and Asp240 each contribute to the Zn(2+) site. The Proton donor role is filled by His263.

The protein belongs to the LpxC family. Requires Zn(2+) as cofactor.

The enzyme catalyses a UDP-3-O-[(3R)-3-hydroxyacyl]-N-acetyl-alpha-D-glucosamine + H2O = a UDP-3-O-[(3R)-3-hydroxyacyl]-alpha-D-glucosamine + acetate. Its pathway is glycolipid biosynthesis; lipid IV(A) biosynthesis; lipid IV(A) from (3R)-3-hydroxytetradecanoyl-[acyl-carrier-protein] and UDP-N-acetyl-alpha-D-glucosamine: step 2/6. Functionally, catalyzes the hydrolysis of UDP-3-O-myristoyl-N-acetylglucosamine to form UDP-3-O-myristoylglucosamine and acetate, the committed step in lipid A biosynthesis. The protein is UDP-3-O-acyl-N-acetylglucosamine deacetylase of Rickettsia conorii (strain ATCC VR-613 / Malish 7).